A 381-amino-acid chain; its full sequence is tRNA pseudouridine synthase D (381 aa).

Asp81 functions as the Nucleophile in the catalytic mechanism. Positions 160 to 335 (GMPNYFGSQR…TLGSRRFFWV (176 aa)) constitute a TRUD domain.

Belongs to the pseudouridine synthase TruD family.

It carries out the reaction uridine(13) in tRNA = pseudouridine(13) in tRNA. Responsible for synthesis of pseudouridine from uracil-13 in transfer RNAs. The chain is tRNA pseudouridine synthase D from Helicobacter pylori (strain J99 / ATCC 700824) (Campylobacter pylori J99).